A 523-amino-acid chain; its full sequence is Cytochrome P450 52-N1 (523 aa).

A helical membrane pass occupies residues 5–25 (AVLGAFAAFLLYMDVLYPFVI). Position 469 (C469) interacts with heme.

The protein belongs to the cytochrome P450 family. Heme serves as cofactor.

The protein resides in the membrane. It catalyses the reaction an omega-methyl-long-chain fatty acid + reduced [NADPH--hemoprotein reductase] + O2 = an omega-hydroxy-long-chain fatty acid + oxidized [NADPH--hemoprotein reductase] + H2O + H(+). It carries out the reaction (9Z,12Z)-octadecadienoate + reduced [NADPH--hemoprotein reductase] + O2 = 18-hydroxy-(9Z,12Z)-octadecadienoate + oxidized [NADPH--hemoprotein reductase] + H2O + H(+). The catalysed reaction is (9Z)-octadecenoate + reduced [NADPH--hemoprotein reductase] + O2 = 18-hydroxy-(9Z)-octadecenoate + oxidized [NADPH--hemoprotein reductase] + H2O + H(+). The enzyme catalyses hexadecanoate + reduced [NADPH--hemoprotein reductase] + O2 = 16-hydroxyhexadecanoate + oxidized [NADPH--hemoprotein reductase] + H2O + H(+). It catalyses the reaction (9Z)-hexadecenoate + reduced [NADPH--hemoprotein reductase] + O2 = (9Z)-16-hydroxyhexadec-9-enoate + oxidized [NADPH--hemoprotein reductase] + H2O + H(+). It carries out the reaction octadecanoate + reduced [NADPH--hemoprotein reductase] + O2 = 18-hydroxyoctadecanoate + oxidized [NADPH--hemoprotein reductase] + H2O + H(+). Functionally, catalyzes the terminal (at the omega-position) hydroxylation of a fatty acid. Probably involved in alkane metabolism. Linoleic acid is the preferred substrate, but it acts on various other C-16, C-18 and C-20 saturated and unsaturated fatty acids, namely palmitic, palmitoleic, stearic, oleic, alpha-linoleic, arachidonic and myristic acid. The sequence is that of Cytochrome P450 52-N1 from Starmerella bombicola (Yeast).